A 294-amino-acid chain; its full sequence is Shikimate dehydrogenase (NADP(+)) (294 aa).

Shikimate is bound by residues 22–24 (SLS) and Ser-69. The active-site Proton acceptor is the Lys-73. The shikimate site is built by Asn-94 and Asp-111. Residues 135–139 (GAGGA) and Leu-236 each bind NADP(+). Shikimate is bound at residue Tyr-238. Gly-260 is a binding site for NADP(+).

It belongs to the shikimate dehydrogenase family. In terms of assembly, homodimer.

The catalysed reaction is shikimate + NADP(+) = 3-dehydroshikimate + NADPH + H(+). It participates in metabolic intermediate biosynthesis; chorismate biosynthesis; chorismate from D-erythrose 4-phosphate and phosphoenolpyruvate: step 4/7. Functionally, involved in the biosynthesis of the chorismate, which leads to the biosynthesis of aromatic amino acids. Catalyzes the reversible NADPH linked reduction of 3-dehydroshikimate (DHSA) to yield shikimate (SA). In Streptococcus equi subsp. zooepidemicus (strain MGCS10565), this protein is Shikimate dehydrogenase (NADP(+)).